The chain runs to 353 residues: Thrombopoietin (353 aa).

The signal sequence occupies residues 1–21; sequence MELTELLLVVMLLLTARLTLS. Serine 22 is a glycosylation site (O-linked (GalNAc...) serine). 2 disulfides stabilise this stretch: cysteine 28-cysteine 172 and cysteine 50-cysteine 106. 4 O-linked (GalNAc...) threonine glycosylation sites follow: threonine 58, threonine 131, threonine 179, and threonine 180. A glycan (O-linked (GalNAc...) serine) is linked at serine 184. Asparagine 197 and asparagine 206 each carry an N-linked (GlcNAc...) (complex) asparagine glycan. Threonine 213 carries an O-linked (GalNAc...) threonine glycan. Asparagine 234 and asparagine 255 each carry an N-linked (GlcNAc...) (complex) asparagine glycan. The tract at residues 257–353 is disordered; it reads TRGLFPGPSR…THSQNLSQEG (97 aa). O-linked (GalNAc...) serine glycosylation is present at serine 265. Positions 275 to 304 are enriched in polar residues; sequence SSGTSDTGSLPPNLQPGYSPSPTHPPTGQY. The span at 324-335 shows a compositional bias: pro residues; it reads LPDPSAPTPTPT. 2 N-linked (GlcNAc...) asparagine glycosylation sites follow: asparagine 340 and asparagine 348. Residues 343–353 show a composition bias toward polar residues; it reads YTHSQNLSQEG.

This sequence belongs to the EPO/TPO family. Interacts with MPL/TPOR.

It is found in the secreted. Functionally, lineage-specific cytokine affecting the proliferation and maturation of megakaryocytes from their committed progenitor cells. It acts at a late stage of megakaryocyte development. It may be the major physiological regulator of circulating platelets. This chain is Thrombopoietin (THPO), found in Homo sapiens (Human).